The chain runs to 589 residues: Coiled-coil domain-containing protein 22 homolog (589 aa).

Coiled-coil stretches lie at residues 287-426 and 523-589; these read KTPL…LQTK and CEEL…TSRQ. The interval 568-589 is disordered; the sequence is EMQNESQRLEESIRRMEVTSRQ. Residues 574-589 show a composition bias toward basic and acidic residues; sequence QRLEESIRRMEVTSRQ.

It belongs to the CCDC22 family.

In Aedes aegypti (Yellowfever mosquito), this protein is Coiled-coil domain-containing protein 22 homolog.